Reading from the N-terminus, the 296-residue chain is Copper resistance protein B (296 aa).

The N-terminal stretch at 1 to 23 is a signal peptide; the sequence is MKRNLKAIPVLVAGLFTSQLSIA.

The protein localises to the cell outer membrane. Required for the copper-inducible expression of copper resistance. The polypeptide is Copper resistance protein B (pcoB) (Escherichia coli).